The chain runs to 600 residues: Elongation factor 4 (600 aa).

One can recognise a tr-type G domain in the interval 5-187 (KYIRNFSIIA…AIVNKLPPPK (183 aa)). GTP is bound by residues 17–22 (DHGKST) and 134–137 (NKLD).

Belongs to the TRAFAC class translation factor GTPase superfamily. Classic translation factor GTPase family. LepA subfamily.

The protein localises to the cell inner membrane. It catalyses the reaction GTP + H2O = GDP + phosphate + H(+). Its function is as follows. Required for accurate and efficient protein synthesis under certain stress conditions. May act as a fidelity factor of the translation reaction, by catalyzing a one-codon backward translocation of tRNAs on improperly translocated ribosomes. Back-translocation proceeds from a post-translocation (POST) complex to a pre-translocation (PRE) complex, thus giving elongation factor G a second chance to translocate the tRNAs correctly. Binds to ribosomes in a GTP-dependent manner. This chain is Elongation factor 4, found in Rickettsia africae (strain ESF-5).